We begin with the raw amino-acid sequence, 49 residues long: Small ribosomal subunit protein uS14B (49 aa).

This sequence belongs to the universal ribosomal protein uS14 family. Zinc-binding uS14 subfamily. In terms of assembly, part of the 30S ribosomal subunit.

In terms of biological role, binds 16S rRNA, required for the assembly of 30S particles. This chain is Small ribosomal subunit protein uS14B, found in Natronomonas pharaonis (strain ATCC 35678 / DSM 2160 / CIP 103997 / JCM 8858 / NBRC 14720 / NCIMB 2260 / Gabara) (Halobacterium pharaonis).